The primary structure comprises 96 residues: Protein RnfH (96 aa).

Belongs to the UPF0125 (RnfH) family.

This Escherichia fergusonii (strain ATCC 35469 / DSM 13698 / CCUG 18766 / IAM 14443 / JCM 21226 / LMG 7866 / NBRC 102419 / NCTC 12128 / CDC 0568-73) protein is Protein RnfH.